The chain runs to 335 residues: Trans-3-hydroxy-L-proline dehydratase (335 aa).

Cys91 acts as the Proton acceptor in catalysis. Substrate-binding positions include 92–93 (GH), His222, and 256–257 (GS).

It belongs to the proline racemase family. In terms of assembly, homodimer.

The enzyme catalyses trans-3-hydroxy-L-proline = 1-pyrroline-2-carboxylate + H2O. In terms of biological role, catalyzes the dehydration of trans-3-hydroxy-L-proline (t3LHyp) to Delta(1)-pyrroline-2-carboxylate (Pyr2C). Does not possess neither proline racemase nor 4-hydroxyproline 2-epimerase activities. The chain is Trans-3-hydroxy-L-proline dehydratase from Burkholderia cenocepacia (strain HI2424).